Here is an 890-residue protein sequence, read N- to C-terminus: DNA mismatch repair protein MutS (890 aa).

607 to 614 (GPNMSGKS) is an ATP binding site.

Belongs to the DNA mismatch repair MutS family.

Functionally, this protein is involved in the repair of mismatches in DNA. It is possible that it carries out the mismatch recognition step. This protein has a weak ATPase activity. The sequence is that of DNA mismatch repair protein MutS from Bacillus mycoides (strain KBAB4) (Bacillus weihenstephanensis).